Here is a 270-residue protein sequence, read N- to C-terminus: Putative postmeiotic segregation increased 2-like protein 11 (270 aa).

Belongs to the DNA mismatch repair MutL/HexB family.

This chain is Putative postmeiotic segregation increased 2-like protein 11 (PMS2P11), found in Homo sapiens (Human).